The following is a 331-amino-acid chain: 3-dehydroquinate synthase homolog (331 aa).

It belongs to the archaeal-type DHQ synthase family.

The chain is 3-dehydroquinate synthase homolog from Persephonella marina (strain DSM 14350 / EX-H1).